The sequence spans 46 residues: uncharacterized protein (46 aa).

This is an uncharacterized protein from Dictyostelium discoideum (Social amoeba).